A 115-amino-acid chain; its full sequence is Large ribosomal subunit protein bL20 (115 aa).

It belongs to the bacterial ribosomal protein bL20 family.

Its function is as follows. Binds directly to 23S ribosomal RNA and is necessary for the in vitro assembly process of the 50S ribosomal subunit. It is not involved in the protein synthesizing functions of that subunit. This Prochlorococcus marinus (strain MIT 9215) protein is Large ribosomal subunit protein bL20.